The sequence spans 368 residues: Phospho-N-acetylmuramoyl-pentapeptide-transferase (368 aa).

The next 9 membrane-spanning stretches (helical) occupy residues 23–43 (YLTF…IFAG), 72–92 (VPTM…FLWA), 98–118 (HVWL…IDDY), 139–159 (VTLG…SVLL), 170–190 (LSVD…TAVS), 201–221 (GLAA…AYLC), 238–258 (AGEV…FLWF), 281–301 (VIAL…VFFV), and 345–365 (KIVI…LMTL).

Belongs to the glycosyltransferase 4 family. MraY subfamily. Mg(2+) is required as a cofactor.

Its subcellular location is the cell inner membrane. It carries out the reaction UDP-N-acetyl-alpha-D-muramoyl-L-alanyl-gamma-D-glutamyl-meso-2,6-diaminopimeloyl-D-alanyl-D-alanine + di-trans,octa-cis-undecaprenyl phosphate = di-trans,octa-cis-undecaprenyl diphospho-N-acetyl-alpha-D-muramoyl-L-alanyl-D-glutamyl-meso-2,6-diaminopimeloyl-D-alanyl-D-alanine + UMP. The protein operates within cell wall biogenesis; peptidoglycan biosynthesis. Catalyzes the initial step of the lipid cycle reactions in the biosynthesis of the cell wall peptidoglycan: transfers peptidoglycan precursor phospho-MurNAc-pentapeptide from UDP-MurNAc-pentapeptide onto the lipid carrier undecaprenyl phosphate, yielding undecaprenyl-pyrophosphoryl-MurNAc-pentapeptide, known as lipid I. In Chlorobaculum tepidum (strain ATCC 49652 / DSM 12025 / NBRC 103806 / TLS) (Chlorobium tepidum), this protein is Phospho-N-acetylmuramoyl-pentapeptide-transferase.